Consider the following 83-residue polypeptide: uncharacterized protein (83 aa).

This is an uncharacterized protein from Escherichia phage 186 (Bacteriophage 186).